The chain runs to 304 residues: Putative dihydroorotate dehydrogenase A (fumarate) (304 aa).

FMN contacts are provided by residues Ser22 and 46-47 (KG). Substrate contacts are provided by residues Lys46 and 70–74 (NSVGL). FMN-binding residues include Asn100 and Asn128. Position 128 (Asn128) interacts with substrate. The active-site Nucleophile is the Cys131. Lys166 and Val192 together coordinate FMN. 193-194 (NT) provides a ligand contact to substrate. Residues Gly218, 244–245 (GG), and 266–267 (GT) each bind FMN.

This sequence belongs to the dihydroorotate dehydrogenase family. Type 1 subfamily. Homodimer. Requires FMN as cofactor.

The protein resides in the cytoplasm. The enzyme catalyses (S)-dihydroorotate + fumarate = orotate + succinate. Its pathway is pyrimidine metabolism; UMP biosynthesis via de novo pathway. In terms of biological role, catalyzes the conversion of dihydroorotate to orotate with fumarate as the electron acceptor. This Solibacter usitatus (strain Ellin6076) protein is Putative dihydroorotate dehydrogenase A (fumarate) (pyrD).